A 237-amino-acid polypeptide reads, in one-letter code: Bax inhibitor 1 (237 aa).

At 1–29 (MNIFDRKINFDALLKFSHITPSTQQHLKK) the chain is on the cytoplasmic side. A Glycyl lysine isopeptide (Lys-Gly) (interchain with G-Cter in ubiquitin) cross-link involves residue Lys7. The chain crosses the membrane as a helical span at residues 30–50 (VYASFALCMFVAAAGAYVHVV). The Lumenal portion of the chain corresponds to 51-52 (TH). Residues 53-73 (FIQAGLLSALGSLALMIWLMA) traverse the membrane as a helical segment. At 74–86 (TPHSHETEQKRLG) the chain is on the cytoplasmic side. The chain crosses the membrane as a helical span at residues 87–107 (LLAGFAFLTGVGLGPALELCI). Over 108-112 (AVNPS) the chain is Lumenal. The chain crosses the membrane as a helical span at residues 113–133 (ILPTAFMGTAMIFTCFSLSAL). Residues 134 to 139 (YARRRS) are Cytoplasmic-facing. Residues 140–160 (YLFLGGILMSAMSLMLLSSLG) form a helical membrane-spanning segment. At 161–166 (NLFFGS) the chain is on the lumenal side. Residues 167–187 (IWLFQANLYLGLLVMCGFVLF) traverse the membrane as a helical segment. At 188–206 (DTQLIIEKAEHGDKDYIWH) the chain is on the cytoplasmic side. Positions 207-227 (CVDLFLDFVTLFRKLMLILAF) form an intramembrane region, helical. The Cytoplasmic segment spans residues 228–237 (NEKDKKKEKK).

The protein belongs to the BI1 family. As to quaternary structure, interacts with BCL2. Interacts with BCL2L1. Interacts with ERN1. Post-translationally, ubiquitinated by BFAR, leading to proteasomal degradation. In terms of tissue distribution, highly abundant in adult testis.

It localises to the endoplasmic reticulum membrane. Functionally, endoplasmic reticulum (ER)-resident protein that confers cellular protection as an anti-apoptotic protein by limiting multiple stress-inducing pathways surrounding the endoplasmic reticulum and mitochondria. Inhibits the activities of the key sensor for the endoplasmic reticulum unfolded protein response IRE1alpha/ERN1 both directly and by blocking BAX/BAK binding. Modulates ER calcium homeostasis by acting as a calcium-leak channel. Negatively regulates autophagy and autophagosome formation, especially during periods of nutrient deprivation, and reduces cell survival during starvation. This Mus musculus (Mouse) protein is Bax inhibitor 1 (Tmbim6).